The following is a 396-amino-acid chain: Elongation factor Tu (396 aa).

Residues 10–206 (KPHVNIGTIG…AVDEYIPTPQ (197 aa)) enclose the tr-type G domain. The segment at 19-26 (GHVDHGKT) is G1. 19–26 (GHVDHGKT) provides a ligand contact to GTP. T26 provides a ligand contact to Mg(2+). The tract at residues 60 to 64 (GITIS) is G2. The interval 81 to 84 (DCPG) is G3. GTP-binding positions include 81–85 (DCPGH) and 136–139 (NKVD). The segment at 136–139 (NKVD) is G4. The segment at 174–176 (SAL) is G5.

It belongs to the TRAFAC class translation factor GTPase superfamily. Classic translation factor GTPase family. EF-Tu/EF-1A subfamily. Monomer.

The protein resides in the cytoplasm. It catalyses the reaction GTP + H2O = GDP + phosphate + H(+). In terms of biological role, GTP hydrolase that promotes the GTP-dependent binding of aminoacyl-tRNA to the A-site of ribosomes during protein biosynthesis. The protein is Elongation factor Tu of Stigmatella aurantiaca.